The sequence spans 262 residues: Acyl-[acyl-carrier-protein]--UDP-N-acetylglucosamine O-acyltransferase (262 aa).

It belongs to the transferase hexapeptide repeat family. LpxA subfamily. As to quaternary structure, homotrimer.

It is found in the cytoplasm. The enzyme catalyses a (3R)-hydroxyacyl-[ACP] + UDP-N-acetyl-alpha-D-glucosamine = a UDP-3-O-[(3R)-3-hydroxyacyl]-N-acetyl-alpha-D-glucosamine + holo-[ACP]. The protein operates within glycolipid biosynthesis; lipid IV(A) biosynthesis; lipid IV(A) from (3R)-3-hydroxytetradecanoyl-[acyl-carrier-protein] and UDP-N-acetyl-alpha-D-glucosamine: step 1/6. Functionally, involved in the biosynthesis of lipid A, a phosphorylated glycolipid that anchors the lipopolysaccharide to the outer membrane of the cell. The protein is Acyl-[acyl-carrier-protein]--UDP-N-acetylglucosamine O-acyltransferase of Shigella dysenteriae serotype 1 (strain Sd197).